The following is a 312-amino-acid chain: Olfactory receptor 867 (312 aa).

Topologically, residues 1–6 (MILNCN) are extracellular. The helical transmembrane segment at 7–30 (PFSGLFLSMYLVTVLGNLLIILAV) threads the bilayer. The Cytoplasmic segment spans residues 31–38 (SSNSHLHN). The chain crosses the membrane as a helical span at residues 39–60 (LMYFFLSNLSFVDICFISTTIP). The Extracellular segment spans residues 61-81 (KMLVNIHSQTKDISYIECLSQ). Residues cysteine 78 and cysteine 160 are joined by a disulfide bond. The chain crosses the membrane as a helical span at residues 82–101 (VYFLTTFGGMDNFLLTLMAC). Over 102–120 (DRYVAICHPLNYTVIMNLQ) the chain is Cytoplasmic. Residues 121–139 (LCALLILMFWLIMFCVSLI) form a helical membrane-spanning segment. Residues 140 to 177 (HVLLMNELNFSRGTEIPHFFCELAQVLKVANSDTHINN) lie on the Extracellular side of the membrane. Residue asparagine 148 is glycosylated (N-linked (GlcNAc...) asparagine). A helical membrane pass occupies residues 178 to 200 (VFMYVVTSLLGLIPMTGILMSYS). Residues 201–217 (QIASSLLKMSSSVSKYK) lie on the Cytoplasmic side of the membrane. The helical transmembrane segment at 218-241 (AFSTCGSHLCVVSLFYGSATIVYF) threads the bilayer. Residues 242–253 (CSSVLHSTHKKM) are Extracellular-facing. A helical membrane pass occupies residues 254–273 (IASLMYTVISPMLNPFIYSL). The Cytoplasmic portion of the chain corresponds to 274–312 (RNKDVKGALGKLFIRVASCPLWSKDFRPKFILKPERQSL).

This sequence belongs to the G-protein coupled receptor 1 family. Epithelium of the tongue; including the taste buds.

It is found in the cell membrane. Functionally, possible olfactory or taste receptor. This chain is Olfactory receptor 867 (Olr867), found in Rattus norvegicus (Rat).